The sequence spans 358 residues: Arginase (358 aa).

The Mn(2+) site is built by His-146, Asp-174, His-176, and Asp-178. Substrate is bound by residues His-176–Asn-180, Ser-187–Asn-189, and Asp-233. Residues Asp-280 and Asp-282 each coordinate Mn(2+). Residues Thr-294 and Glu-325 each contribute to the substrate site.

It belongs to the arginase family. As to quaternary structure, homohexamer. Mn(2+) is required as a cofactor.

Its subcellular location is the cytoplasm. It carries out the reaction L-arginine + H2O = urea + L-ornithine. The protein operates within nitrogen metabolism; urea cycle; L-ornithine and urea from L-arginine: step 1/1. The protein is Arginase (aga-1) of Neurospora crassa (strain ATCC 24698 / 74-OR23-1A / CBS 708.71 / DSM 1257 / FGSC 987).